Reading from the N-terminus, the 1491-residue chain is Pleckstrin homology domain-containing family H member 2 (1491 aa).

Residues A19–V177 are a coiled coil. Disordered regions lie at residues A232–P435, D506–F546, and S612–A668. A compositionally biased stretch (polar residues) spans T253–R264. The segment covering K374–K385 has biased composition (basic and acidic residues). A compositionally biased stretch (polar residues) spans L392–P406. Positions S657–D666 are enriched in low complexity. 2 consecutive PH domains span residues P702–R796 and K810–G918. The MyTH4 domain maps to H954 to L1109. An FERM domain is found at F1120–K1449. Residues Q1466–L1491 are disordered.

Self-associates. Interacts with TGFB1I1. As to expression, expressed in the kidney and testis. Expressed in the kidney exclusively by glomerular podocytes.

It localises to the cytoplasm. The protein resides in the cytoskeleton. It is found in the cell membrane. The protein localises to the cell projection. Its subcellular location is the lamellipodium. Its function is as follows. In the kidney glomerulus may play a role in linking podocyte foot processes to the glomerular basement membrane. May be involved in stabilization of F-actin by attenuating its depolymerization. Can recruit TGFB1I1 from focal adhesions to podocyte lamellipodia. The chain is Pleckstrin homology domain-containing family H member 2 (Plekhh2) from Mus musculus (Mouse).